Here is a 1012-residue protein sequence, read N- to C-terminus: Tolloid-like protein 2 (1012 aa).

The N-terminal stretch at 1-21 (MPLATTLGTLVLLLLLPLPRG) is a signal peptide. The propeptide occupies 22 to 146 (AEVTGDHSNV…AKTFSARVRR (125 aa)). Residues 83 to 135 (KPSIDKPGHDTGGLEETSARWPNDTASNASIQAPRKDGKDATTFLPNPGTSNT) form a disordered region. Positions 126–135 (FLPNPGTSNT) are enriched in polar residues. The Peptidase M12A domain occupies 146–346 (RATTSRTERI…AQARKLYKCP (201 aa)). An N-linked (GlcNAc...) asparagine glycan is attached at Asn168. 4 cysteine pairs are disulfide-bonded: Cys189–Cys345, Cys209–Cys231, Cys211–Cys212, and Cys348–Cys374. Residue His239 participates in Zn(2+) binding. Glu240 is a catalytic residue. Zn(2+) contacts are provided by His243 and His249. CUB domains lie at 348 to 460 (CGET…YEAM) and 461 to 573 (CGGD…FFKE). N-linked (GlcNAc...) asparagine glycosylation is found at Asn358 and Asn389. 12 disulfides stabilise this stretch: Cys401-Cys423, Cys461-Cys487, Cys514-Cys536, Cys577-Cys589, Cys585-Cys598, Cys600-Cys613, Cys617-Cys643, Cys670-Cys692, Cys733-Cys744, Cys740-Cys753, Cys755-Cys768, and Cys773-Cys799. The EGF-like 1; calcium-binding domain maps to 573-614 (EVDECSWPDHGGCEQRCVNTLGSYTCACDPGYELAADKKTCE). Residues 617 to 729 (CGGFITKLNG…RGFRAHFFSD (113 aa)) enclose the CUB 3 domain. The N-linked (GlcNAc...) asparagine glycan is linked to Asn625. An EGF-like 2; calcium-binding domain is found at 729–769 (DKDECAKDNGGCQQECVNTFGSYLCRCRNGYRLHENGHDCK). CUB domains lie at 773 to 885 (CAYK…HSTE) and 886 to 1002 (CGGR…YTST). A glycan (N-linked (GlcNAc...) asparagine) is linked at Asn802. 3 cysteine pairs are disulfide-bonded: Cys826-Cys848, Cys886-Cys916, and Cys943-Cys965. 2 positions are modified to omega-N-methylarginine: Arg960 and Arg963.

The cofactor is Zn(2+).

It is found in the secreted. Its function is as follows. Protease which specifically processes pro-lysyl oxidase. Required for the embryonic development. Predominant protease, which in the development, influences dorsal-ventral patterning and skeletogenesis. This is Tolloid-like protein 2 (Tll2) from Mus musculus (Mouse).